The following is a 254-amino-acid chain: Persulfide dioxygenase ETHE1, mitochondrial (254 aa).

The N-terminal 7 residues, 1–7 (MASAVVR), are a transit peptide targeting the mitochondrion. 3 positions are modified to phosphoserine: serine 14, serine 17, and serine 19. Lysine 32 carries the N6-acetyllysine; alternate modification. N6-succinyllysine; alternate is present on lysine 32. At lysine 66 the chain carries N6-acetyllysine. Fe cation contacts are provided by histidine 79, histidine 135, and aspartate 154. At lysine 172 the chain carries N6-acetyllysine; alternate. N6-succinyllysine; alternate is present on lysine 172.

The protein belongs to the metallo-beta-lactamase superfamily. Glyoxalase II family. As to quaternary structure, homodimer. Monomer. Interacts with TST. May interact with RELA. Fe(2+) serves as cofactor.

The protein localises to the cytoplasm. Its subcellular location is the nucleus. The protein resides in the mitochondrion matrix. It carries out the reaction S-sulfanylglutathione + O2 + H2O = sulfite + glutathione + 2 H(+). Functionally, first described as a protein that can shuttle between the nucleus and the cytoplasm and suppress p53-induced apoptosis by sequestering the transcription factor RELA/NFKB3 in the cytoplasm and preventing its accumulation in the nucleus. Sulfur dioxygenase that plays an essential role in hydrogen sulfide catabolism in the mitochondrial matrix. Hydrogen sulfide (H(2)S) is first oxidized by SQRDL, giving rise to cysteine persulfide residues. ETHE1 consumes molecular oxygen to catalyze the oxidation of the persulfide, once it has been transferred to a thiophilic acceptor, such as glutathione (R-SSH). Plays an important role in metabolic homeostasis in mitochondria by metabolizing hydrogen sulfide and preventing the accumulation of supraphysiological H(2)S levels that have toxic effects, due to the inhibition of cytochrome c oxidase. This chain is Persulfide dioxygenase ETHE1, mitochondrial (Ethe1), found in Mus musculus (Mouse).